The sequence spans 486 residues: MNSTKPRVRFAPSPTGELHIGNARTAFFNWLYARHYGGKLILRIEDTDRQRSTRAFEARLIDDLKWLSLDWDEGPDGKGEVGPYRQSERLDLYESFLKNLQKDGRVYPCYCTEDELELERTSLLSRKMAPRYMGKCRNLTEADRRRLEAQGRRPTWRFRVSQGPVLFQDLIRGTMKFQGEAVGDFIIVRSNGTPAYNFAVVIDDHFMEISTVIRGEDHLSNTAIQLMLYEALGFEPPEFAHHSLILGKDRTKLSKRHGSVSVREFREKGILPEALLNYLALLGSSIGEGREVCSLEEIITAFSLDRAGKSGAVFDEDKLLWMNSLYIHEEPAIKLIERLRPFIEKAGYDVNKWETPWLDRMVEAVKPNLTTLADIGSYVKMIVEEPVRIDEDAAAVLRETETQMVLRTLLQLIEEGKFSHEDFYSQVMTALRKVTGARGKRLFMPVRAALTGTTRGPELDKIFVLLGEQSVKERLKKALNMQGNFS.

The 'HIGH' region signature appears at 12-22 (PSPTGELHIGN). The 'KMSKS' region signature appears at 252 to 256 (KLSKR). An ATP-binding site is contributed by Lys255.

This sequence belongs to the class-I aminoacyl-tRNA synthetase family. Glutamate--tRNA ligase type 1 subfamily. Monomer.

It localises to the cytoplasm. The catalysed reaction is tRNA(Glu) + L-glutamate + ATP = L-glutamyl-tRNA(Glu) + AMP + diphosphate. Catalyzes the attachment of glutamate to tRNA(Glu) in a two-step reaction: glutamate is first activated by ATP to form Glu-AMP and then transferred to the acceptor end of tRNA(Glu). This Syntrophus aciditrophicus (strain SB) protein is Glutamate--tRNA ligase 2.